We begin with the raw amino-acid sequence, 95 residues long: Small ribosomal subunit protein uS15 (95 aa).

It belongs to the universal ribosomal protein uS15 family. As to quaternary structure, part of the 30S ribosomal subunit. Forms a bridge to the 50S subunit in the 70S ribosome, contacting the 23S rRNA.

In terms of biological role, one of the primary rRNA binding proteins, it binds directly to 16S rRNA where it helps nucleate assembly of the platform of the 30S subunit by binding and bridging several RNA helices of the 16S rRNA. Forms an intersubunit bridge (bridge B4) with the 23S rRNA of the 50S subunit in the ribosome. The chain is Small ribosomal subunit protein uS15 from Streptomyces avermitilis (strain ATCC 31267 / DSM 46492 / JCM 5070 / NBRC 14893 / NCIMB 12804 / NRRL 8165 / MA-4680).